The primary structure comprises 220 residues: Flavin-dependent thymidylate synthase (220 aa).

The ThyX domain occupies 1–208; it reads MKIDILDKGF…PWTFEAFLKY (208 aa). FAD is bound by residues threonine 55, 78-80, and glutamate 86; that span reads RHR. DUMP contacts are provided by residues 75–78, 86–90, and arginine 147; these read QWFR and ELSGR. The short motif at 78–88 is the ThyX motif element; that stretch reads RHRIASYNELS. FAD is bound by residues 163 to 165 and asparagine 169; that span reads NAR. A dUMP-binding site is contributed by arginine 174. Arginine 174 serves as the catalytic Involved in ionization of N3 of dUMP, leading to its activation.

This sequence belongs to the thymidylate synthase ThyX family. As to quaternary structure, homotetramer. Requires FAD as cofactor.

The catalysed reaction is dUMP + (6R)-5,10-methylene-5,6,7,8-tetrahydrofolate + NADPH + H(+) = dTMP + (6S)-5,6,7,8-tetrahydrofolate + NADP(+). It participates in pyrimidine metabolism; dTTP biosynthesis. In terms of biological role, catalyzes the reductive methylation of 2'-deoxyuridine-5'-monophosphate (dUMP) to 2'-deoxythymidine-5'-monophosphate (dTMP) while utilizing 5,10-methylenetetrahydrofolate (mTHF) as the methyl donor, and NADPH and FADH(2) as the reductant. This chain is Flavin-dependent thymidylate synthase, found in Thermotoga sp. (strain RQ2).